The chain runs to 198 residues: Superoxide dismutase [Mn], mitochondrial (198 aa).

H26 lines the Mn(2+) pocket. Y34 carries the 3'-nitrotyrosine modification. Residues K44 and K51 each carry the N6-acetyllysine; alternate modification. N6-succinyllysine; alternate occurs at positions 44 and 51. H74 lines the Mn(2+) pocket. The residue at position 90 (K90) is an N6-acetyllysine. 2 positions are modified to N6-acetyllysine; alternate: K98 and K106. K98 and K106 each carry N6-succinyllysine; alternate. Mn(2+)-binding residues include D159 and H163. K178 carries the N6-acetyllysine modification.

This sequence belongs to the iron/manganese superoxide dismutase family. In terms of assembly, homotetramer. Requires Mn(2+) as cofactor. Nitrated under oxidative stress. Nitration coupled with oxidation inhibits the catalytic activity. In terms of processing, acetylation at Lys-98 decreases enzymatic activity. Deacetylated by SIRT3 upon exposure to ionizing radiations or after long fasting. Post-translationally, polyubiquitinated; leading to proteasomal degradation. Deubiquitinated by USP36 which increases protein stability.

It is found in the mitochondrion matrix. It catalyses the reaction 2 superoxide + 2 H(+) = H2O2 + O2. In terms of biological role, destroys superoxide anion radicals which are normally produced within the cells and which are toxic to biological systems. The chain is Superoxide dismutase [Mn], mitochondrial (SOD2) from Macaca fuscata fuscata (Japanese macaque).